A 466-amino-acid polypeptide reads, in one-letter code: Gamma-aminobutyric acid permease (466 aa).

Residues 2–20 (GQSSQPHELGGGLKSRHVT) lie on the Cytoplasmic side of the membrane. Helical transmembrane passes span 21-41 (MLSI…VAIA) and 42-62 (EAGP…VMIM). Over 63 to 96 (RMLAEMAVATPDTGSFSTYADKAIGRWAGYTIGW) the chain is Cytoplasmic. Residues 97–117 (LYWWFWVLVIPLEANIAAMIL) form a helical membrane-spanning segment. A topological domain (periplasmic) is located at residue His118. The helical transmembrane segment at 119 to 139 (SWVPGIPIWLFSLVITLALTG) threads the bilayer. Residues 140–153 (SNLLSVKNYGEFEF) lie on the Cytoplasmic side of the membrane. Residues 154-174 (WLALCKVIAILAFIFLGAVAI) traverse the membrane as a helical segment. Topologically, residues 175-199 (SGFYPYAEVSGISRLWDSGGFMPNG) are periplasmic. A helical transmembrane segment spans residues 200-220 (FGAVLSAMLITMFSFMGAEIV). Residues 221–246 (TIAAAESDTPEKHIVRATNSVIWRIS) lie on the Cytoplasmic side of the membrane. A helical membrane pass occupies residues 247-267 (IFYLCSIFVVVALIPWNMPGL). Topologically, residues 268 to 286 (KAVGSYRSVLELLNIPHAK) are periplasmic. A helical transmembrane segment spans residues 287-307 (LIMDCVILLSVTSCLNSALYT). The Cytoplasmic segment spans residues 308–334 (ASRMLYSLSRRGDAPAVMGKINRSKTP). The helical transmembrane segment at 335 to 355 (YVAVLLSTGAAFLTVVVNYYA) threads the bilayer. The Periplasmic portion of the chain corresponds to 356 to 358 (PAK). Residues 359–379 (VFKFLIDSSGAIALLVYLVIA) form a helical membrane-spanning segment. Topologically, residues 380-402 (VSQLRMRKILRAEGSEIRLRMWL) are cytoplasmic. Residues 403-423 (YPWLTWLVIGFITFVLVVMLF) form a helical membrane-spanning segment. Topologically, residues 424 to 428 (RPAQQ) are periplasmic. A helical transmembrane segment spans residues 429-449 (LEVISTGLLAIGIICTVPIMA). The Cytoplasmic segment spans residues 450 to 466 (RWKKLVLWQKTPVHNTR).

The protein belongs to the amino acid-polyamine-organocation (APC) superfamily. Amino acid transporter (AAT) (TC 2.A.3.1) family. As to quaternary structure, monomer.

It localises to the cell inner membrane. The enzyme catalyses 4-aminobutanoate(in) + H(+)(in) = 4-aminobutanoate(out) + H(+)(out). Its pathway is amino-acid degradation; 4-aminobutanoate degradation. Uptake is stimulated by ammonium sulfate and abolished by 2,4-dinitrophenol. Is affected both topologically and kinetically by phospholipid composition of the membrane. In cells lacking phosphatidylethanolamine (PE), the N-terminal hairpin is inverted relative to the membrane and the rate of GABA transport is reduced by more than 99%. Transporter for gamma-aminobutyrate (GABA). Transport is driven by the membrane potential. Can also transport a number of GABA analogs such as nipecotic acid or muscimol. This chain is Gamma-aminobutyric acid permease, found in Escherichia coli (strain K12).